The primary structure comprises 691 residues: DNA ligase (691 aa).

Residues Asp-41–Asp-45, Ser-90–Leu-91, and Glu-130 each bind NAD(+). The N6-AMP-lysine intermediate role is filled by Lys-132. Residues Arg-153, Glu-190, Lys-307, and Lys-331 each coordinate NAD(+). Cys-425, Cys-428, Cys-443, and Cys-449 together coordinate Zn(2+). One can recognise a BRCT domain in the interval Ala-610–Arg-691.

It belongs to the NAD-dependent DNA ligase family. LigA subfamily. Mg(2+) serves as cofactor. Requires Mn(2+) as cofactor.

It carries out the reaction NAD(+) + (deoxyribonucleotide)n-3'-hydroxyl + 5'-phospho-(deoxyribonucleotide)m = (deoxyribonucleotide)n+m + AMP + beta-nicotinamide D-nucleotide.. DNA ligase that catalyzes the formation of phosphodiester linkages between 5'-phosphoryl and 3'-hydroxyl groups in double-stranded DNA using NAD as a coenzyme and as the energy source for the reaction. It is essential for DNA replication and repair of damaged DNA. This chain is DNA ligase, found in Burkholderia multivorans (strain ATCC 17616 / 249).